The sequence spans 171 residues: Inosine/xanthosine triphosphatase (171 aa).

Threonine 8–lysine 13 contacts substrate. Aspartate 38 and glutamine 68 together coordinate Mg(2+).

It belongs to the YjjX NTPase family. Homodimer. Mg(2+) is required as a cofactor. It depends on Mn(2+) as a cofactor.

The catalysed reaction is XTP + H2O = XDP + phosphate + H(+). The enzyme catalyses ITP + H2O = IDP + phosphate + H(+). Phosphatase that hydrolyzes non-canonical purine nucleotides such as XTP and ITP to their respective diphosphate derivatives. Probably excludes non-canonical purines from DNA/RNA precursor pool, thus preventing their incorporation into DNA/RNA and avoiding chromosomal lesions. The protein is Inosine/xanthosine triphosphatase of Cronobacter sakazakii (strain ATCC BAA-894) (Enterobacter sakazakii).